Consider the following 1189-residue polypeptide: MEENNQNQCIPYNCLSNPEEVLLDGERISTGNSSIDISLSLVQFLVSNFVPGGGFLVGLIDFVWGIVGPSQWDAFLVQIEQLINERIAEFARNAAIANLEGLGNNFNIYVEAFKEWEEDPNNPATRTRVIDRFRILDGLLERDIPSFRISGFEVPLLSVYAQAANLHLAILRDSVIFGERWGLTTINVNENYNRLIRHIDEYADHCANTYNRGLNNLPKSTYQDWITYNRLRRDLTLTVLDIAAFFPNYDNRRYPIQPVGQLTREVYTDPLINFNPQLQSVAQLPTFNVMESSAIRNPHLFDILNNLTIFTDWFSVGRNFYWGGHRVISSLIGGGNITSPIYGREANQEPPRSFTFNGPVFRTLSNPTLRLLQQPWPAPPFNLRGVEGVEFSTPTNSFTYRGRGTVDSLTELPPEDNSVPPREGYSHRLCHATFVQRSGTPFLTTGVVFSWTHRSATLTNTIDPERINQIPLVKGFRVWGGTSVITGPGFTGGDILRRNTFGDFVSLQVNINSPITQRYRLRFRYASSRDARVIVLTGAASTGVGGQVSVNMPLQKTMEIGENLTSRTFRYTDFSNPFSFRANPDIIGISEQPLFGAGSISSGELYIDKIEIILADATFEAESDLERAQKAVNALFTSSNQIGLKTDVTDYHIDQVSNLVDCLSDEFCLDEKRELSEKVKHAKRLSDERNLLQDPNFRGINRQPDRGWRGSTDITIQGGDDVFKENYVTLPGTVDECYPTYLYQKIDESKLKAYTRYELRGYIEDSQDLEIYLIRYNAKHEIVNVPGTGSLWPLSAQSPIGKCGEPNRCAPHLEWNPDLDCSCRDGEKCAHHSHHFTLDIDVGCTDLNEDLGLWVIFKIKTQDNHARLGNLEFLEEKPLLGEALARVKRAEKKWRDKREKLQLETNIVYKEAKESVDALFVNSQYDRLQVNTNIAMIHAADKRVHRIREAYLPELSVIPGVNAAIFEELEGRIFTAYSLYDARNVIKNGDFNNGLLCWNVKGHVDVEEQNNHRSVLVIPEWEAEVSQEVRVCPGRGYILRVTAYKEGYGEGCVTIHEIEDNTDELKFSNCVEEEVYPNNTVTCNNYTGTQEEYEGTYTSRNQGYDEAYGNNPSVPADYASVYEEKSYTDGRRENPCESNRGYGDYTPLPAGYVTKDLEYFPETDKVWIEIGETEGTFIVDSVELLLMEE.

The protein belongs to the delta endotoxin family.

Promotes colloidosmotic lysis by binding to the midgut epithelial cells of many lepidopteran larvae including Spodoptera species. The protein is Pesticidal crystal protein Cry1Ca (cry1Ca) of Bacillus thuringiensis subsp. aizawai.